A 241-amino-acid chain; its full sequence is Uracil-DNA glycosylase (241 aa).

Asp68 (proton acceptor) is an active-site residue.

This sequence belongs to the uracil-DNA glycosylase (UDG) superfamily. UNG family.

The protein resides in the cytoplasm. It carries out the reaction Hydrolyzes single-stranded DNA or mismatched double-stranded DNA and polynucleotides, releasing free uracil.. Its function is as follows. Excises uracil residues from the DNA which can arise as a result of misincorporation of dUMP residues by DNA polymerase or due to deamination of cytosine. The chain is Uracil-DNA glycosylase from Sinorhizobium medicae (strain WSM419) (Ensifer medicae).